A 188-amino-acid chain; its full sequence is Peptidyl-tRNA hydrolase (188 aa).

Tyrosine 15 is a binding site for tRNA. Catalysis depends on histidine 20, which acts as the Proton acceptor. Residues phenylalanine 66, asparagine 68, and asparagine 114 each contribute to the tRNA site.

This sequence belongs to the PTH family. Monomer.

It localises to the cytoplasm. It catalyses the reaction an N-acyl-L-alpha-aminoacyl-tRNA + H2O = an N-acyl-L-amino acid + a tRNA + H(+). Functionally, hydrolyzes ribosome-free peptidyl-tRNAs (with 1 or more amino acids incorporated), which drop off the ribosome during protein synthesis, or as a result of ribosome stalling. Its function is as follows. Catalyzes the release of premature peptidyl moieties from peptidyl-tRNA molecules trapped in stalled 50S ribosomal subunits, and thus maintains levels of free tRNAs and 50S ribosomes. The polypeptide is Peptidyl-tRNA hydrolase (Lactococcus lactis subsp. lactis (strain IL1403) (Streptococcus lactis)).